The chain runs to 262 residues: Tropinone reductase homolog At2g29310 (262 aa).

Position 13 to 37 (13 to 37) interacts with NADP(+); that stretch reads LVTGAASGIGYAIVEELASFGAIIH. A substrate-binding site is contributed by Ser-146. Tyr-159 (proton acceptor) is an active-site residue.

It belongs to the short-chain dehydrogenases/reductases (SDR) family. SDR65C subfamily.

The sequence is that of Tropinone reductase homolog At2g29310 from Arabidopsis thaliana (Mouse-ear cress).